Reading from the N-terminus, the 542-residue chain is MFS-type efflux pump MMF1 (542 aa).

The next 8 membrane-spanning stretches (helical) occupy residues Trp24–Ile44, Ile51–Leu71, Val98–Val118, Gly124–Leu144, Phe151–Val171, Trp179–Leu199, Leu215–Thr235, and Val248–Ile268. An N-linked (GlcNAc...) asparagine glycan is attached at Asn285. The next 6 membrane-spanning stretches (helical) occupy residues Phe296 to Ile316, Ile326 to Ile346, Leu355 to Val375, Ile384 to Ile404, Ala419 to Phe439, and Ile490 to Leu510.

The protein belongs to the major facilitator superfamily.

It is found in the cell membrane. Its function is as follows. Glycosyltransferase; part of the gene cluster that mediates the biosynthesis of mannosylerythritol lipids (MELs), surface-active substances that enhance the availability of water-insoluble substrates. MMF1 is directly involved in the secretiopn of MALs. This Pseudozyma antarctica (strain T-34) (Yeast) protein is MFS-type efflux pump MMF1.